The sequence spans 398 residues: Cytochrome b (398 aa).

Transmembrane regions (helical) follow at residues 38–58 (FGPLAGICLVIQIVTGVFLAM), 82–104 (WFLRYMHANGASMFLIVVHFHMF), 119–139 (VRCSGVVIFLLMIVTAFIGYV), and 185–205 (FFSLHYLLPFLLVGASILHLG). His-88 and His-102 together coordinate heme b. Positions 189 and 203 each coordinate heme b. An a ubiquinone-binding site is contributed by His-208. 4 helical membrane passes run 231–251 (YYVKDLVGWVAFAIFSSIFIF), 295–316 (AGGVAAIAPVFICLLALPFLNQ), 328–348 (IYHIIYLLFLADRLLLGWIGC), and 355–374 (FVTIGQISPFVFFLFFAIMP).

Belongs to the cytochrome b family. In terms of assembly, the main subunits of complex b-c1 are: cytochrome b, cytochrome c1 and the Rieske protein. Heme b serves as cofactor.

The protein localises to the mitochondrion inner membrane. Its function is as follows. Component of the ubiquinol-cytochrome c reductase complex (complex III or cytochrome b-c1 complex) that is part of the mitochondrial respiratory chain. The b-c1 complex mediates electron transfer from ubiquinol to cytochrome c. Contributes to the generation of a proton gradient across the mitochondrial membrane that is then used for ATP synthesis. The polypeptide is Cytochrome b (MT-CYB) (Daucus carota (Wild carrot)).